The primary structure comprises 472 residues: MSKGKITQIIGAVVDVKFDGELPEILSALECKNGDNRLVLEVAQHLGESSVRTIAMDATEGLKRGDEVTATGAPIQVPVGPETLGRIINVIGEPIDEKGEVKTKEKWPIHRAAPEFSDQSTETEILVTGIKVVDLLAPYAKGGKIGLFGGAGVGKTVLIMELINNVAKAHGGFSVFAGVGERTREGNDLYHEMIDSGVIKPEGPGSKAALVYGQMNEPPGARARVALTGLTVAEYFRDQEGQDVLFFVDNIFRFTQAGSEVSALLGRIPSAVGYQPTLATDMGNLQERITTTNKGSITSVQAIYVPADDLTDPAPATSFAHLDATTVLSRQIAEIGIYPAVDPLDSTSRILDPRIVGDEHYRVAREVQKILQTYKSLQDIIAILGMDELSEEDKLTVARARKIQRFLSQPFFVAEVFTGSPGKLVDLESTIKGFAAICNGEYDHLPEAAFYMVGTIEEAVEKAEKMAKDAAA.

149-156 (GGAGVGKT) contacts ATP.

Belongs to the ATPase alpha/beta chains family. In terms of assembly, F-type ATPases have 2 components, CF(1) - the catalytic core - and CF(0) - the membrane proton channel. CF(1) has five subunits: alpha(3), beta(3), gamma(1), delta(1), epsilon(1). CF(0) has three main subunits: a(1), b(2) and c(9-12). The alpha and beta chains form an alternating ring which encloses part of the gamma chain. CF(1) is attached to CF(0) by a central stalk formed by the gamma and epsilon chains, while a peripheral stalk is formed by the delta and b chains.

It is found in the cell inner membrane. It catalyses the reaction ATP + H2O + 4 H(+)(in) = ADP + phosphate + 5 H(+)(out). Produces ATP from ADP in the presence of a proton gradient across the membrane. The catalytic sites are hosted primarily by the beta subunits. This chain is ATP synthase subunit beta, found in Pelagibacter ubique (strain HTCC1062).